The primary structure comprises 337 residues: Hairy/enhancer-of-split related with YRPW motif protein 2 (337 aa).

The interval 1-52 is disordered; the sequence is MKRPCEETTSESDMDETIDVGSENNYSGQSTSSVIRLNSPTTTSQIMARKKR. Acidic residues predominate over residues 8-18; the sequence is TTSESDMDETI. Residues 22–46 are compositionally biased toward polar residues; sequence SENNYSGQSTSSVIRLNSPTTTSQI. Residues 47–116 are transcriptional repression and interaction with NCOR1 and SIN3A; it reads MARKKRRGII…GGKGYFDAHA (70 aa). The bHLH domain maps to 48–103; the sequence is ARKKRRGIIEKRRRDRINNSLSELRRLVPTAFEKQGSAKLEKAEILQMTVDHLKML. The 36-residue stretch at 122-157 folds into the Orange domain; that stretch reads MSIGFRECLTEVARYLSSVEGLDSSDPLRVRLVSHL. Residues 307–325 show a composition bias toward polar residues; the sequence is LSVSATSSPQQTSSGTNNK. The segment at 307 to 337 is disordered; sequence LSVSATSSPQQTSSGTNNKPYRPWGTEVGAF. A YRPW motif motif is present at residues 327–330; that stretch reads YRPW.

It belongs to the HEY family. As to quaternary structure, may self-associate. Interacts with GATA4, HES1 and HEYL. Interacts with HDAC1, NCOR1 and SIN3A. Interacts with ARNT and GATA6.

Its subcellular location is the nucleus. Its function is as follows. Downstream effector of Notch signaling which may be required for cardiovascular development. Transcriptional repressor which binds preferentially to the canonical E box sequence 5'-CACGTG-3'. Represses transcription by the cardiac transcriptional activators GATA4 and GATA6. The protein is Hairy/enhancer-of-split related with YRPW motif protein 2 (HEY2) of Homo sapiens (Human).